Consider the following 360-residue polypeptide: UDP-N-acetylglucosamine--N-acetylmuramyl-(pentapeptide) pyrophosphoryl-undecaprenol N-acetylglucosamine transferase (360 aa).

2 residues coordinate UDP-N-acetyl-alpha-D-glucosamine: Ser198 and Gln289.

Belongs to the glycosyltransferase 28 family. MurG subfamily.

Its subcellular location is the cell membrane. The enzyme catalyses Mur2Ac(oyl-L-Ala-gamma-D-Glu-L-Lys-D-Ala-D-Ala)-di-trans,octa-cis-undecaprenyl diphosphate + UDP-N-acetyl-alpha-D-glucosamine = beta-D-GlcNAc-(1-&gt;4)-Mur2Ac(oyl-L-Ala-gamma-D-Glu-L-Lys-D-Ala-D-Ala)-di-trans,octa-cis-undecaprenyl diphosphate + UDP + H(+). It functions in the pathway cell wall biogenesis; peptidoglycan biosynthesis. Cell wall formation. Catalyzes the transfer of a GlcNAc subunit on undecaprenyl-pyrophosphoryl-MurNAc-pentapeptide (lipid intermediate I) to form undecaprenyl-pyrophosphoryl-MurNAc-(pentapeptide)GlcNAc (lipid intermediate II). The chain is UDP-N-acetylglucosamine--N-acetylmuramyl-(pentapeptide) pyrophosphoryl-undecaprenol N-acetylglucosamine transferase from Streptococcus pyogenes serotype M18 (strain MGAS8232).